Consider the following 237-residue polypeptide: Uridylate kinase (237 aa).

Residue 12 to 15 participates in ATP binding; it reads KLSG. The interval 20 to 25 is involved in allosteric activation by GTP; the sequence is GENGYG. Glycine 54 lines the UMP pocket. ATP is bound by residues glycine 55 and arginine 59. Residues aspartate 72 and 133–140 each bind UMP; that span reads TGNPYFST. ATP is bound by residues tyrosine 166 and aspartate 169.

It belongs to the UMP kinase family. In terms of assembly, homohexamer.

Its subcellular location is the cytoplasm. It catalyses the reaction UMP + ATP = UDP + ADP. It participates in pyrimidine metabolism; CTP biosynthesis via de novo pathway; UDP from UMP (UMPK route): step 1/1. Allosterically activated by GTP. Inhibited by UTP. In terms of biological role, catalyzes the reversible phosphorylation of UMP to UDP. The polypeptide is Uridylate kinase (Clostridium tetani (strain Massachusetts / E88)).